Here is a 138-residue protein sequence, read N- to C-terminus: Protein PsiE homolog (138 aa).

Transmembrane regions (helical) follow at residues 12-34 (YLLQ…ALLI), 56-76 (YEML…ALII), 84-104 (HFPL…LIII), and 109-129 (AIST…FFIA).

It belongs to the PsiE family.

The protein localises to the cell membrane. This is Protein PsiE homolog from Bacillus subtilis (strain 168).